The primary structure comprises 296 residues: Putative S-adenosyl-L-methionine-dependent methyltransferase MAP_3881 (296 aa).

S-adenosyl-L-methionine contacts are provided by residues D121 and D150–L151.

It belongs to the UPF0677 family.

Exhibits S-adenosyl-L-methionine-dependent methyltransferase activity. The polypeptide is Putative S-adenosyl-L-methionine-dependent methyltransferase MAP_3881 (Mycolicibacterium paratuberculosis (strain ATCC BAA-968 / K-10) (Mycobacterium paratuberculosis)).